The primary structure comprises 295 residues: CBY1-interacting BAR domain-containing protein 1 (295 aa).

The N-terminal 49 residues, 1–49 (MMSRTPDARARDTQTKQIQENITSVEKHFGDLCQLFAAYVRKTARLRDK), are a transit peptide targeting the mitochondrion. Residues 12–222 (DTQTKQIQEN…NVDEEGDLEV (211 aa)) form a BAR-like region. Positions 111-185 (KREDLKQTQS…KQKIRDIKKV (75 aa)) form a coiled coil. Residues 243–265 (SKLSLNRTGTSMSKSGTMQSRTS) are compositionally biased toward polar residues. The disordered stretch occupies residues 243–295 (SKLSLNRTGTSMSKSGTMQSRTSSRQRKRDDEEDEEEDDEDEDDLEEVTDDEH). Positions 273–295 (DEEDEEEDDEDEDDLEEVTDDEH) are enriched in acidic residues.

This sequence belongs to the CIBAR family.

The protein localises to the cytoplasm. The protein resides in the cytoskeleton. It localises to the microtubule organizing center. It is found in the centrosome. Its subcellular location is the centriole. The protein localises to the cell projection. The protein resides in the cilium. It localises to the nucleus. It is found in the mitochondrion inner membrane. Its subcellular location is the flagellum. Functionally, plays a critical role in regulating mitochondrial ultrastructure and function by maintaining the integrity of mitochondrial morphology, particularly the organization of cristae. Plays a crucial role in ciliogenesis. Plays a key role in the correct positioning of the annulus, a septin-based ring structure in the sperm flagellum, serving both as a physical barrier and a membrane diffusion barrier that separates the midpiece (MP) from the principal piece (PP). The protein is CBY1-interacting BAR domain-containing protein 1 (cibar1) of Danio rerio (Zebrafish).